We begin with the raw amino-acid sequence, 114 residues long: UPF0102 protein HPG27_782 (114 aa).

This sequence belongs to the UPF0102 family.

The chain is UPF0102 protein HPG27_782 from Helicobacter pylori (strain G27).